The chain runs to 257 residues: MSQIEFKNVSKVYPNCHVGLKNINLNIEKGEFAVIVGLSGAGKSTLLRSVNRLHDITSGEIFIQGKSITKAHGKALLKMRRNIGMIFQHFNLVKRSSVLRNVLSGRVGYHPTWKMVLGLFPKEDKIKAMDALERVNILDKYNQRSDELSGGQQQRISIARALCQESEIILADEPVASLDPLTTKQVMDDLRKINQELGITILINLHFVDLAKEYGTRIIGLRDGEVVYDGPASEATDDIFSEIYGRTIKEDEKLGVN.

The region spanning 4–248 (IEFKNVSKVY…IFSEIYGRTI (245 aa)) is the ABC transporter domain. Residue 37-44 (GLSGAGKS) participates in ATP binding.

The protein belongs to the ABC transporter superfamily. Phosphonates importer (TC 3.A.1.9.1) family. As to quaternary structure, the complex is composed of two ATP-binding proteins (PhnC), two transmembrane proteins (PhnE) and a solute-binding protein (PhnD).

The protein resides in the cell membrane. It carries out the reaction phosphonate(out) + ATP + H2O = phosphonate(in) + ADP + phosphate + H(+). Its function is as follows. Part of the ABC transporter complex PhnCDE involved in phosphonates import. Responsible for energy coupling to the transport system. In Staphylococcus aureus (strain bovine RF122 / ET3-1), this protein is Phosphonates import ATP-binding protein PhnC.